The primary structure comprises 582 residues: ATP-dependent lipid A-core flippase (582 aa).

Helical transmembrane passes span 23 to 43, 61 to 81, 140 to 160, 163 to 183, 247 to 267, and 273 to 293; these read AAFIAAILCMIGYSAIDTLFL, ILLYGALFVPFIFILRGSLNV, AVLVLVKEGAFVAGLLGLMFY, WQLSLVFLVIGPLVAKVVGVV, AISTSVIQFIASLSLSMVLVI, and MLGELSAGAFTTLLTAMIMLL. In terms of domain architecture, ABC transmembrane type-1 spans 26–308; it reads IAAILCMIGY…LTNVNSDFQR (283 aa). Residues 340–576 form the ABC transporter domain; the sequence is IVFDDVTFSY…EGAYFQLHNL (237 aa). 374-381 is a binding site for ATP; it reads GRSGSGKS.

It belongs to the ABC transporter superfamily. Lipid exporter (TC 3.A.1.106) family. In terms of assembly, homodimer.

It localises to the cell inner membrane. The catalysed reaction is ATP + H2O + lipid A-core oligosaccharideSide 1 = ADP + phosphate + lipid A-core oligosaccharideSide 2.. In terms of biological role, involved in lipopolysaccharide (LPS) biosynthesis. Translocates lipid A-core from the inner to the outer leaflet of the inner membrane. Transmembrane domains (TMD) form a pore in the inner membrane and the ATP-binding domain (NBD) is responsible for energy generation. In Idiomarina loihiensis (strain ATCC BAA-735 / DSM 15497 / L2-TR), this protein is ATP-dependent lipid A-core flippase.